A 259-amino-acid polypeptide reads, in one-letter code: Protein YIF1B (259 aa).

Methionine 1 is modified (N-acetylmethionine). Residues 1–61 (MHATGLAAPA…QPSPGSLGYP (61 aa)) form a disordered region. The Cytoplasmic portion of the chain corresponds to 9-153 (PAGTPRLRKW…APRFDINAPD (145 aa)). Threonine 12 is subject to Phosphothreonine. Positions 14–24 (RLRKWPSKRRV) are enriched in basic residues. Serine 64 bears the Phosphoserine mark. The helical transmembrane segment at 154-174 (LYIPAMAFITYILVAGLALGT) threads the bilayer. Residues 175 to 186 (QDRMIGGVLTGL) lie on the Extracellular side of the membrane. A helical transmembrane segment spans residues 187–207 (LFGKIGYYLVLAWCCVSIFVF). The Cytoplasmic portion of the chain corresponds to 208-237 (MIRTLRLKILAQAAAEGVPVRGARNQLRMY). The chain crosses the membrane as a helical span at residues 238 to 258 (LTMAVAAAQPVLMYWLTFHLV). Position 259 (arginine 259) is a topological domain, extracellular.

This sequence belongs to the YIF1 family. Interacts with HTR1A (via C-terminus). Interacts with ABCB9 (via TMD0); this interaction allows (but is not essential) the ER-to-Golgi trafficking and strongly depends on a salt bridge within TMD0. Highly expressed in brain. Expressed in heart, kidney, and lung and lower levels in spleen, muscle, and intestine (at protein level). Expressed in serotoninergic neurons (at protein level).

It localises to the endoplasmic reticulum membrane. The protein resides in the golgi apparatus membrane. The protein localises to the endoplasmic reticulum-Golgi intermediate compartment membrane. Functions in endoplasmic reticulum to Golgi vesicle-mediated transport and regulates the proper organization of the endoplasmic reticulum and the Golgi. Plays a key role in targeting to neuronal dendrites receptors such as HTR1A. Plays also a role in primary cilium and sperm flagellum assembly probably through protein transport to these compartments. The protein is Protein YIF1B of Rattus norvegicus (Rat).